A 389-amino-acid chain; its full sequence is bZIP transcription factor 68 (389 aa).

Over residues 1 to 16 (MGSSEMEKSGKEKEPK) the composition is skewed to basic and acidic residues. Disordered regions lie at residues 1-42 (MGSS…VSAG), 124-154 (MAEA…KRSK), 170-236 (AGKN…NLPV), 285-318 (QPWL…RKQA), and 356-389 (SSLK…QDVA). A compositionally biased stretch (low complexity) spans 19 to 32 (PPSTSSSAPATVVS). Over residues 137-149 (GDGKPSDGKEKLP) the composition is skewed to basic and acidic residues. Residue K154 forms a Glycyl lysine isopeptide (Lys-Gly) (interchain with G-Cter in ubiquitin) linkage. Low complexity predominate over residues 170-205 (AGKNSGASANGACSKSAESGSDGSSDGSDANSQNDS). 2 stretches are compositionally biased toward basic and acidic residues: residues 206-215 (GSRHNGKDGE) and 304-318 (SNRE…RKQA). Residues 295-358 (EIKRQRRKQS…EELLAENSSL (64 aa)) form the bZIP domain. Residues 297 to 316 (KRQRRKQSNRESARRSRLRK) are basic motif. The interval 323–358 (LAQRAEVLNGENSSLRAEINKLKSQYEELLAENSSL) is leucine-zipper. A compositionally biased stretch (polar residues) spans 356 to 366 (SSLKNKFSSAP). Residues 372-389 (DLDKNEQEPQRSTRQDVA) are compositionally biased toward basic and acidic residues.

The protein belongs to the bZIP family. In terms of assembly, monomer, homodimer and heterodimers with GBF1/BZIP41, GBF2/BZIP54 and GBF3/BZIP55. Heterodimers with BZIP16. Interacts with GIP1.

It localises to the nucleus. Functionally, transcriptional activator that binds to the G-box motif (5'-CACGTG-3') and other cis-acting elements with 5'-ACGT-3' core, such as Hex, C-box and as-1 motifs. Possesses high binding affinity to G-box, much lower affinity to Hex and C-box, and little affinity to as-1 element. G-box and G-box-like motifs are cis-acting elements defined in promoters of certain plant genes which are regulated by such diverse stimuli as light-induction or hormone control. Binds to the G-box motif 5'-CACGTG-3' of LHCB2.4 (At3g27690) promoter. May act as transcriptional activator in light-regulated expression of LHCB2.4. Probably binds DNA as monomer. DNA-binding activity is redox-dependent. The chain is bZIP transcription factor 68 from Arabidopsis thaliana (Mouse-ear cress).